The following is a 226-amino-acid chain: Cytidylate kinase (226 aa).

12–20 (GPSGAGKGT) is a binding site for ATP.

The protein belongs to the cytidylate kinase family. Type 1 subfamily.

The protein resides in the cytoplasm. The enzyme catalyses CMP + ATP = CDP + ADP. It catalyses the reaction dCMP + ATP = dCDP + ADP. In Vibrio parahaemolyticus serotype O3:K6 (strain RIMD 2210633), this protein is Cytidylate kinase.